Reading from the N-terminus, the 354-residue chain is Ribosomal RNA large subunit methyltransferase M (354 aa).

S-adenosyl-L-methionine contacts are provided by residues S183, 216–219 (SPGG), D235, D255, and D271. The active-site Proton acceptor is K300.

This sequence belongs to the class I-like SAM-binding methyltransferase superfamily. RNA methyltransferase RlmE family. RlmM subfamily. In terms of assembly, monomer.

Its subcellular location is the cytoplasm. It carries out the reaction cytidine(2498) in 23S rRNA + S-adenosyl-L-methionine = 2'-O-methylcytidine(2498) in 23S rRNA + S-adenosyl-L-homocysteine + H(+). Catalyzes the 2'-O-methylation at nucleotide C2498 in 23S rRNA. The polypeptide is Ribosomal RNA large subunit methyltransferase M (Pseudomonas putida (strain GB-1)).